Consider the following 453-residue polypeptide: TATA box-binding protein-associated factor RNA polymerase I subunit A (453 aa).

In terms of assembly, component of the transcription factor SL1/TIF-IB complex, composed of TBP and at least TAF1A, TAF1B, TAF1C and TAF1D. In the complex interacts directly with TBP, TAF1A and TAF1B. Interaction of the SL1/TIF-IB subunits with TBP excludes interaction of TBP with the transcription factor IID (TFIID) subunits. Interacts with UBFT. Interacts with CEBPA (isoform 1 and isoform 4). Part of Pol I pre-initiation complex (PIC), in which Pol I core assembles with RRN3 and promoter-bound UTBF and SL1/TIF-IB complex.

Its subcellular location is the nucleus. It is found in the nucleolus. Its function is as follows. Component of the transcription factor SL1/TIF-IB complex, which is involved in the assembly of the PIC (pre-initiation complex) during RNA polymerase I-dependent transcription. The rate of PIC formation probably is primarily dependent on the rate of association of SL1/TIF-IB with the rDNA promoter. SL1/TIF-IB is involved in stabilization of nucleolar transcription factor 1/UBTF on rDNA. Formation of SL1/TIF-IB excludes the association of TBP with TFIID subunits. The sequence is that of TATA box-binding protein-associated factor RNA polymerase I subunit A (Taf1a) from Mus musculus (Mouse).